The primary structure comprises 437 residues: Amino-acid acetyltransferase (437 aa).

Residues 289 to 429 (ENIRLATSFD…EHYNYQRMSK (141 aa)) enclose the N-acetyltransferase domain.

This sequence belongs to the acetyltransferase family. ArgA subfamily.

The protein resides in the cytoplasm. The enzyme catalyses L-glutamate + acetyl-CoA = N-acetyl-L-glutamate + CoA + H(+). The protein operates within amino-acid biosynthesis; L-arginine biosynthesis; N(2)-acetyl-L-ornithine from L-glutamate: step 1/4. The sequence is that of Amino-acid acetyltransferase from Actinobacillus pleuropneumoniae serotype 3 (strain JL03).